A 318-amino-acid polypeptide reads, in one-letter code: Ribosomal RNA small subunit methyltransferase H (318 aa).

Residues 37-39 (GGH), Asp-57, Phe-83, Asp-104, and Gln-111 each bind S-adenosyl-L-methionine.

The protein belongs to the methyltransferase superfamily. RsmH family.

Its subcellular location is the cytoplasm. The enzyme catalyses cytidine(1402) in 16S rRNA + S-adenosyl-L-methionine = N(4)-methylcytidine(1402) in 16S rRNA + S-adenosyl-L-homocysteine + H(+). Its function is as follows. Specifically methylates the N4 position of cytidine in position 1402 (C1402) of 16S rRNA. The polypeptide is Ribosomal RNA small subunit methyltransferase H (Neisseria gonorrhoeae (strain NCCP11945)).